We begin with the raw amino-acid sequence, 354 residues long: Uroporphyrinogen decarboxylase (354 aa).

Residues 27–31 (RQAGR), aspartate 77, tyrosine 154, threonine 209, and histidine 327 each bind substrate.

The protein belongs to the uroporphyrinogen decarboxylase family. In terms of assembly, homodimer.

Its subcellular location is the cytoplasm. The catalysed reaction is uroporphyrinogen III + 4 H(+) = coproporphyrinogen III + 4 CO2. It participates in porphyrin-containing compound metabolism; protoporphyrin-IX biosynthesis; coproporphyrinogen-III from 5-aminolevulinate: step 4/4. Its function is as follows. Catalyzes the decarboxylation of four acetate groups of uroporphyrinogen-III to yield coproporphyrinogen-III. This Escherichia coli (strain 55989 / EAEC) protein is Uroporphyrinogen decarboxylase.